The primary structure comprises 239 residues: MSEPKYKRILLKLSGEALAQGEQGFGVDPTRVHEIAAEIAEVHRLGVDIGVVVGGGNFFRGVAEQAKDMDRVSADHMGMLATVMNSLAVQDALEKQNVQCRVMSAIEIFQVAEPFIRRRAMRHLEKGRVVIFAAGTGNPYFSTDTAASLRAAEIKADVIMKATKVDGIYDADPHKVADATMFAQITYMDVLKKGLRVMDATAISLCQENRLPIVVFNLNERGNIQRVVMGEAVGSLVSA.

Residue 12–15 coordinates ATP; the sequence is KLSG. Residues 21 to 26 form an involved in allosteric activation by GTP region; that stretch reads GEQGFG. Glycine 55 contributes to the UMP binding site. The ATP site is built by glycine 56 and arginine 60. Residues aspartate 75 and 136 to 143 contribute to the UMP site; that span reads TGNPYFST. Threonine 163, tyrosine 169, and aspartate 172 together coordinate ATP.

It belongs to the UMP kinase family. Homohexamer.

The protein localises to the cytoplasm. The catalysed reaction is UMP + ATP = UDP + ADP. Its pathway is pyrimidine metabolism; CTP biosynthesis via de novo pathway; UDP from UMP (UMPK route): step 1/1. With respect to regulation, allosterically activated by GTP. Inhibited by UTP. In terms of biological role, catalyzes the reversible phosphorylation of UMP to UDP. This Koribacter versatilis (strain Ellin345) protein is Uridylate kinase.